The following is an 821-amino-acid chain: Lon protease (821 aa).

Residues 18-216 (LPLMSLREVV…KVYELLQGEI (199 aa)) form the Lon N-terminal domain. 368 to 375 (GPPGVGKT) serves as a coordination point for ATP. The Lon proteolytic domain occupies 606–787 (TSQVGVCTGL…DEVLPQALMA (182 aa)). Active-site residues include serine 693 and lysine 736.

This sequence belongs to the peptidase S16 family. In terms of assembly, homohexamer. Organized in a ring with a central cavity.

The protein localises to the cytoplasm. It carries out the reaction Hydrolysis of proteins in presence of ATP.. ATP-dependent serine protease that mediates the selective degradation of mutant and abnormal proteins as well as certain short-lived regulatory proteins. Required for cellular homeostasis and for survival from DNA damage and developmental changes induced by stress. Degrades polypeptides processively to yield small peptide fragments that are 5 to 10 amino acids long. Binds to DNA in a double-stranded, site-specific manner. In Nitratidesulfovibrio vulgaris (strain ATCC 29579 / DSM 644 / CCUG 34227 / NCIMB 8303 / VKM B-1760 / Hildenborough) (Desulfovibrio vulgaris), this protein is Lon protease.